The primary structure comprises 261 residues: MTDSAAPRLHVQALSAGCAEAARRWAERLGLPLAADDEAEFAVQVGEQGLQVLQLGADSPGPVRVDFVEGASAHRRKFGGGSGQMIAKAVGVQPGIRPRVLDATAGLGRDGFVLASLGCEVTLVERQPLIAALLEDGLERARRDPDVAPIAARMRLLGGNSADLMRAWDGEAPQVVYLDPMFPHRDKSALVKKEMRLFRPLVGDDLDAPALLQAALALASHRVVVKRPRKAPIIEGPKPGYSLEGKSSRYDIYPKKALGKG.

Residues 109-110, 125-126, and Asp179 contribute to the S-adenosyl-L-methionine site; these read RD and ER.

This sequence belongs to the methyltransferase superfamily. RsmJ family.

It is found in the cytoplasm. The catalysed reaction is guanosine(1516) in 16S rRNA + S-adenosyl-L-methionine = N(2)-methylguanosine(1516) in 16S rRNA + S-adenosyl-L-homocysteine + H(+). In terms of biological role, specifically methylates the guanosine in position 1516 of 16S rRNA. This Pseudomonas aeruginosa (strain LESB58) protein is Ribosomal RNA small subunit methyltransferase J.